Consider the following 317-residue polypeptide: Carbonic anhydrase 6 (317 aa).

Residues 1–17 (MRALVSVVSLFFLGIQA) form the signal peptide. Residues 19 to 277 (SDWSYSGDDG…NNHRVVEANF (259 aa)) form the Alpha-carbonic anhydrase domain. Cys-41 and Cys-223 are joined by a disulfide. His-84 functions as the Proton donor/acceptor in the catalytic mechanism. Residues His-110, His-112, and His-137 each coordinate Zn(2+). Residue 219 to 220 (TT) participates in substrate binding. Asn-255 is a glycosylation site (N-linked (GlcNAc...) asparagine).

The protein belongs to the alpha-carbonic anhydrase family. Zn(2+) serves as cofactor. Major constituent of saliva.

The protein localises to the secreted. It carries out the reaction hydrogencarbonate + H(+) = CO2 + H2O. In terms of biological role, reversible hydration of carbon dioxide. Its role in saliva is unknown. This chain is Carbonic anhydrase 6 (Ca6), found in Mus musculus (Mouse).